Reading from the N-terminus, the 964-residue chain is Insulin receptor substrate 1 (964 aa).

Residues 8 to 109 form the PH domain; sequence GMALSGNLKK…WLDKLLVLQR (102 aa). In terms of domain architecture, IRS-type PTB spans 122–236; it reads YDQVWQVVIQ…SAMSAKTESN (115 aa). Residues 249–268 form a disordered region; the sequence is LSHEPMRKRSSSANEASKPI. Residues serine 286, serine 287, and serine 342 each carry the phosphoserine modification. Phosphotyrosine; by INSR is present on tyrosine 410. The YXXM motif 1 signature appears at 410–413; the sequence is YIPM. A disordered region spans residues 527 to 560; it reads ASNRSQSSIGKEGSSYGSSANRQKKSTSAPLLSL. Over residues 528–560 the composition is skewed to polar residues; it reads SNRSQSSIGKEGSSYGSSANRQKKSTSAPLLSL. Serine 554 is modified (phosphoserine). The YXXM motif 2 signature appears at 640–643; that stretch reads YLEM. The span at 698-712 shows a compositional bias: basic and acidic residues; it reads EKWREQPSRSEEKKS. A disordered region spans residues 698 to 735; the sequence is EKWREQPSRSEEKKSNSPLNDNPFSLKPTNVESKSKSH. A compositionally biased stretch (polar residues) spans 713-729; sequence NSPLNDNPFSLKPTNVE. Tyrosine 907 carries the post-translational modification Phosphotyrosine; by INSR. The tract at residues 921–964 is disordered; that stretch reads AKYLKRGSRESPPVSACPEDGNTYARIDFDQSDSSSSSSNIFNT. Phosphoserine occurs at positions 928 and 931. Phosphotyrosine; by INSR is present on tyrosine 944. The segment covering 952–964 has biased composition (low complexity); sequence SDSSSSSSNIFNT.

Bindings to phosphatidylinositol 3-kinase and SHP2.

Functionally, activates phosphatidylinositol 3-kinase when bound to the regulatory p85 subunit. May mediate the control of various cellular processes by insulin-like peptides. When phosphorylated by the insulin receptor binds specifically to various cellular proteins containing SH2 domains. Involved in control of cell proliferation, cell size, and body and organ growth throughout development. Also has a role in a signaling pathway controlling the physiological response required to endure periods of low nutrient conditions. Insulin/insulin-like growth factor (IGF) signaling pathway has a role in regulating aging and is necessary in the ovary for vitellogenic maturation. This Drosophila sechellia (Fruit fly) protein is Insulin receptor substrate 1.